A 362-amino-acid polypeptide reads, in one-letter code: Cobalt-precorrin-5B C(1)-methyltransferase (362 aa).

The protein belongs to the CbiD family.

The catalysed reaction is Co-precorrin-5B + S-adenosyl-L-methionine = Co-precorrin-6A + S-adenosyl-L-homocysteine. It participates in cofactor biosynthesis; adenosylcobalamin biosynthesis; cob(II)yrinate a,c-diamide from sirohydrochlorin (anaerobic route): step 6/10. Its function is as follows. Catalyzes the methylation of C-1 in cobalt-precorrin-5B to form cobalt-precorrin-6A. This chain is Cobalt-precorrin-5B C(1)-methyltransferase, found in Burkholderia multivorans (strain ATCC 17616 / 249).